A 414-amino-acid polypeptide reads, in one-letter code: Gamma-glutamyl phosphate reductase (414 aa).

This sequence belongs to the gamma-glutamyl phosphate reductase family.

The protein localises to the cytoplasm. The catalysed reaction is L-glutamate 5-semialdehyde + phosphate + NADP(+) = L-glutamyl 5-phosphate + NADPH + H(+). Its pathway is amino-acid biosynthesis; L-proline biosynthesis; L-glutamate 5-semialdehyde from L-glutamate: step 2/2. In terms of biological role, catalyzes the NADPH-dependent reduction of L-glutamate 5-phosphate into L-glutamate 5-semialdehyde and phosphate. The product spontaneously undergoes cyclization to form 1-pyrroline-5-carboxylate. The sequence is that of Gamma-glutamyl phosphate reductase from Xanthomonas axonopodis pv. citri (strain 306).